A 332-amino-acid polypeptide reads, in one-letter code: Fructose-1,6-bisphosphatase class 1 (332 aa).

Mg(2+)-binding residues include Glu-89, Asp-110, Leu-112, and Asp-113. Substrate-binding positions include 113-116, Asn-206, Tyr-239, 257-259, and Lys-269; these read DGSS and YLY. Glu-275 is a binding site for Mg(2+).

This sequence belongs to the FBPase class 1 family. Homotetramer. Mg(2+) serves as cofactor.

The protein resides in the cytoplasm. It catalyses the reaction beta-D-fructose 1,6-bisphosphate + H2O = beta-D-fructose 6-phosphate + phosphate. It participates in carbohydrate biosynthesis; gluconeogenesis. The protein is Fructose-1,6-bisphosphatase class 1 of Salmonella typhi.